We begin with the raw amino-acid sequence, 137 residues long: Fluoride-specific ion channel FluC 1 (137 aa).

The next 4 helical transmembrane spans lie at 4-24 (LIYI…YYLG), 37-57 (LATL…TTYI), 62-82 (ILPA…FTTF), and 100-120 (IAFL…GLGY). Na(+) is bound by residues glycine 77 and threonine 80.

The protein belongs to the fluoride channel Fluc/FEX (TC 1.A.43) family.

It is found in the cell membrane. The enzyme catalyses fluoride(in) = fluoride(out). With respect to regulation, na(+) is not transported, but it plays an essential structural role and its presence is essential for fluoride channel function. Functionally, fluoride-specific ion channel. Important for reducing fluoride concentration in the cell, thus reducing its toxicity. The protein is Fluoride-specific ion channel FluC 1 of Bacillus cereus (strain ATCC 10987 / NRS 248).